Here is a 221-residue protein sequence, read N- to C-terminus: Serine/arginine-rich splicing factor 2 (221 aa).

S2 carries the N-acetylserine modification. Position 2 is a phosphoserine (S2). The RRM domain maps to 14-92 (TSLKVDNLTY…RELRVQMARY (79 aa)). Residues T22 and T25 each carry the phosphothreonine modification. At S26 the chain carries Phosphoserine. At K52 the chain carries N6-acetyllysine. Residues 92–221 (YGRPPDSHHS…SPEEEGAVSS (130 aa)) form a disordered region. Basic residues-rich tracts occupy residues 117 to 171 (RRSR…RSKS) and 179 to 189 (SRSRSRSRSRS). Phosphoserine occurs at positions 189, 191, 204, 206, 208, 212, and 220.

Belongs to the splicing factor SR family. In vitro, self-associates and binds SRSF1/SFRS1 (ASF/SF2), SNRNP70 and U2AF1 but not U2AF2. Binds SREK1/SFRS12. Interacts with CCNL1 and CCNL2. Interacts with SCAF11. Interacts with ZRSR2/U2AF1-RS2. Interacts with CCDC55 (via C-terminus). Interacts with BRDT. In terms of processing, extensively phosphorylated on serine residues in the RS domain. Phosphorylated by SRPK2 and this causes its redistribution from the nuclear speckle to nucleoplasm and controls cell fate decision in response to cisplatin treatment. KAT5/TIP60 inhibits its phosphorylation by preventing SRPK2 nuclear translocation. Acetylation on Lys-52 by KAT5/TIP60 promotes its proteasomal degradation. This effect is counterbalanced by HDAC6, which positively controls SRSF2 protein level by deacetylating it and preventing its proteasomal degradation.

It localises to the nucleus. It is found in the nucleoplasm. The protein resides in the nucleus speckle. Its function is as follows. Necessary for the splicing of pre-mRNA. It is required for formation of the earliest ATP-dependent splicing complex and interacts with spliceosomal components bound to both the 5'- and 3'-splice sites during spliceosome assembly. It also is required for ATP-dependent interactions of both U1 and U2 snRNPs with pre-mRNA. Interacts with other spliceosomal components, via the RS domains, to form a bridge between the 5'- and 3'-splice site binding components, U1 snRNP and U2AF. Binds to purine-rich RNA sequences, either 5'-AGSAGAGTA-3' (S=C or G) or 5'-GTTCGAGTA-3'. Can bind to beta-globin mRNA and commit it to the splicing pathway. The phosphorylated form (by SRPK2) is required for cellular apoptosis in response to cisplatin treatment. This chain is Serine/arginine-rich splicing factor 2 (SRSF2), found in Sus scrofa (Pig).